The chain runs to 387 residues: Limonene 1,2-monooxygenase (387 aa).

This sequence belongs to the bacterial luciferase oxidoreductase family. It depends on FAD as a cofactor.

The catalysed reaction is (4S)-limonene + NADPH + O2 + H(+) = limonene 1,2-epoxide + NADP(+) + H2O. It carries out the reaction (4S)-limonene + NADH + O2 + H(+) = limonene 1,2-epoxide + NAD(+) + H2O. It catalyses the reaction (4R)-limonene + NADH + O2 + H(+) = limonene 1,2-epoxide + NAD(+) + H2O. The enzyme catalyses (4R)-limonene + NADPH + O2 + H(+) = limonene 1,2-epoxide + NADP(+) + H2O. The protein operates within terpene metabolism; (4R)-limonene degradation; (1S,4R)-1-hydroxylimonen-2-one from (4R)-limonene: step 1/3. Its function is as follows. Acts on both enantiomers of limonene by their NAD-dependent epoxidation at the 1,2 double bond forming limonene-1,2-epoxide. This Rhodococcus erythropolis (Arthrobacter picolinophilus) protein is Limonene 1,2-monooxygenase (limB).